The sequence spans 508 residues: Cytochrome P450 4A12B (508 aa).

An N-terminal signal peptide occupies residues 1-37 (MSASALSSIRFPGSISEYLQVASVLSLLLLLFKTAQL). Positions 319 and 455 each coordinate heme.

The protein belongs to the cytochrome P450 family. Requires heme as cofactor. In terms of tissue distribution, expressed in lung, but almost undetectable in the kidneys of five different strains.

Its subcellular location is the endoplasmic reticulum membrane. The protein resides in the microsome membrane. It carries out the reaction an organic molecule + reduced [NADPH--hemoprotein reductase] + O2 = an alcohol + oxidized [NADPH--hemoprotein reductase] + H2O + H(+). It catalyses the reaction dodecanoate + reduced [NADPH--hemoprotein reductase] + O2 = 11-hydroxydodecanoate + oxidized [NADPH--hemoprotein reductase] + H2O + H(+). The catalysed reaction is dodecanoate + reduced [NADPH--hemoprotein reductase] + O2 = 12-hydroxydodecanoate + oxidized [NADPH--hemoprotein reductase] + H2O + H(+). The enzyme catalyses (5Z,8Z,11Z,14Z)-eicosatetraenoate + reduced [NADPH--hemoprotein reductase] + O2 = 18-hydroxy-(5Z,8Z,11Z,14Z)-eicosatetraenoate + oxidized [NADPH--hemoprotein reductase] + H2O + H(+). It carries out the reaction (5Z,8Z,11Z,14Z)-eicosatetraenoate + reduced [NADPH--hemoprotein reductase] + O2 = 19-hydroxy-(5Z,8Z,11Z,14Z)-eicosatetraenoate + oxidized [NADPH--hemoprotein reductase] + H2O + H(+). It catalyses the reaction (5Z,8Z,11Z,14Z)-eicosatetraenoate + reduced [NADPH--hemoprotein reductase] + O2 = 20-hydroxy-(5Z,8Z,11Z,14Z)-eicosatetraenoate + oxidized [NADPH--hemoprotein reductase] + H2O + H(+). The catalysed reaction is (5Z,8Z,11Z,14Z,17Z)-eicosapentaenoate + reduced [NADPH--hemoprotein reductase] + O2 = 19-hydroxy-(5Z,8Z,11Z,14Z,17Z)-eicosapentaenoate + oxidized [NADPH--hemoprotein reductase] + H2O + H(+). The enzyme catalyses (5Z,8Z,11Z,14Z,17Z)-eicosapentaenoate + reduced [NADPH--hemoprotein reductase] + O2 = 20-hydroxy-(5Z,8Z,11Z,14Z,17Z)-eicosapentaenoate + oxidized [NADPH--hemoprotein reductase] + H2O + H(+). It carries out the reaction (5Z,8Z,11Z,14Z,17Z)-eicosapentaenoate + reduced [NADPH--hemoprotein reductase] + O2 = (17S,18R)-epoxy-(5Z,8Z,11Z,14Z)-eicosatetraenoate + oxidized [NADPH--hemoprotein reductase] + H2O + H(+). It catalyses the reaction (5Z,8Z,11Z,14Z,17Z)-eicosapentaenoate + reduced [NADPH--hemoprotein reductase] + O2 = (17R,18S)-epoxy-(5Z,8Z,11Z,14Z)-eicosatetraenoate + oxidized [NADPH--hemoprotein reductase] + H2O + H(+). It participates in lipid metabolism; fatty acid metabolism. Activated by cytochrome b5. The Vmax almost doubles in the presence of cytochrome b5. In terms of biological role, a cytochrome P450 monooxygenase involved in the metabolism of fatty acids and their oxygenated derivatives (oxylipins). Mechanistically, uses molecular oxygen inserting one oxygen atom into a substrate, and reducing the second into a water molecule, with two electrons provided by NADPH via cytochrome P450 reductase (CPR; NADPH-ferrihemoprotein reductase). Catalyzes predominantly the oxidation of the terminal carbon (omega-oxidation) of saturated and unsaturated fatty acids. May act as a major omega-hydroxylase for dodecanoic (lauric) acid in kidney. Participates in omega-hydroxylation of (5Z,8Z,11Z,14Z)-eicosatetraenoic acid (arachidonate) to 20-hydroxyeicosatetraenoic acid (20-HETE), a signaling molecule acting both as vasoconstrictive and natriuretic with overall effect on arterial blood pressure. Acts as an omega-hydroxylase and epoxidase toward (5Z,8Z,11Z,14Z,17Z)-eicosapentaenoc acid (EPA). Catalyzes the epoxidation of the last double bond of EPA with no preferred stereoselectivity, producing both (R,S) and (S,R) stereoisomers. Can also catalyze the omega-1 and omega-2 oxidation of fatty acids with lower efficiency. The chain is Cytochrome P450 4A12B from Mus musculus (Mouse).